Here is an 84-residue protein sequence, read N- to C-terminus: Transcription elongation factor 1 homolog (84 aa).

Zn(2+)-binding residues include cysteine 26, cysteine 29, cysteine 50, and cysteine 53.

It belongs to the ELOF1 family.

The protein resides in the nucleus. Its function is as follows. Transcription elongation factor implicated in the maintenance of proper chromatin structure in actively transcribed regions. This Caenorhabditis elegans protein is Transcription elongation factor 1 homolog.